A 432-amino-acid polypeptide reads, in one-letter code: MKTKILFFLFFSTFSFSIFAAPITIAIDPGHGGKDPGAISRNLGIYEKNVTLSIAKELKALLDKDPHFRGVLTRKSDYYISVPERSEIARKFKANYLISIHADSSKSPDRRGASVWVLSNRRANDEMGQWLEDDEKRSELLGGAGKVLSHNNDKYLDQTVLDLQFGHSQRTGYVLGEHILHHFAKVTTLSRSTPQHASLGVLRSPDIPSVLVETGFLSNSEEEKKLNSQTYRRRIAYMIYEGLVAFHSGKTNTLVKDNLVQNIKQNDIKKSGKNNRTSEQNINEDNIKDSGIRHIVKKGESLGSLSNKYHVKVSDIIKLNQLKRKTLWLNESIKIPDNVEIKNKSLTIKENDFHKKQNSLVNNTNKDLKKEKNTQTNNQKNIIPLYHKVTKNQTLYAISREYNIPVNILLSLNPHLKNGKVITGQKIKLREK.

The first 20 residues, 1 to 20 (MKTKILFFLFFSTFSFSIFA), serve as a signal peptide directing secretion. The MurNAc-LAA domain occupies 25-244 (IAIDPGHGGK…IAYMIYEGLV (220 aa)). LysM domains follow at residues 292–335 (IRHI…SIKI) and 385–429 (LYHK…KIKL).

It belongs to the N-acetylmuramoyl-L-alanine amidase 3 family.

It localises to the periplasm. It carries out the reaction Hydrolyzes the link between N-acetylmuramoyl residues and L-amino acid residues in certain cell-wall glycopeptides.. Functionally, cell-wall hydrolase involved in septum cleavage during cell division. The protein is Probable N-acetylmuramoyl-L-alanine amidase AmiB (amiB) of Haemophilus influenzae (strain ATCC 51907 / DSM 11121 / KW20 / Rd).